Reading from the N-terminus, the 350-residue chain is Phenylalanine--tRNA ligase alpha subunit (350 aa).

Residue glutamate 257 coordinates Mg(2+).

It belongs to the class-II aminoacyl-tRNA synthetase family. Phe-tRNA synthetase alpha subunit type 1 subfamily. In terms of assembly, tetramer of two alpha and two beta subunits. Mg(2+) serves as cofactor.

The protein resides in the cytoplasm. It catalyses the reaction tRNA(Phe) + L-phenylalanine + ATP = L-phenylalanyl-tRNA(Phe) + AMP + diphosphate + H(+). The polypeptide is Phenylalanine--tRNA ligase alpha subunit (Listeria monocytogenes serotype 4b (strain CLIP80459)).